Reading from the N-terminus, the 164-residue chain is Large ribosomal subunit protein uL15 (164 aa).

Disordered regions lie at residues 1-49 (MTKL…SIAG) and 143-164 (EKAG…SAEA). Over residues 22 to 36 (RGPGSGKGKTAGRGV) the composition is skewed to gly residues.

Belongs to the universal ribosomal protein uL15 family. As to quaternary structure, part of the 50S ribosomal subunit.

Binds to the 23S rRNA. This chain is Large ribosomal subunit protein uL15, found in Phenylobacterium zucineum (strain HLK1).